A 101-amino-acid polypeptide reads, in one-letter code: opdI (101 aa).

The chain crosses the membrane as a helical span at residues 30-49; the sequence is GGMGGALKIVFLGMMTYFIA. A disordered region spans residues 56–101; the sequence is SQHPPTDFNAPVQSVPQRAQRPSDTRLQGPVLLASNHPSGDSASPE. Polar residues-rich tracts occupy residues 66 to 81 and 91 to 101; these read PVQS…SDTR and NHPSGDSASPE.

Its subcellular location is the membrane. Part of the gene cluster that mediates the biosynthesis of oxopyrrolidines, polyketide-amino acid hybrid compounds with feature structures of tetramic acid. Does not seem to play a role in oxopyrrolidines A and B biosynthesis. This chain is opdI, found in Penicillium oxalicum (strain 114-2 / CGMCC 5302) (Penicillium decumbens).